Consider the following 385-residue polypeptide: Proteinase-activated receptor 4 (385 aa).

The N-terminal stretch at 1-17 (MWGRLLLWPLVLGFSLS) is a signal peptide. Residues 18–47 (GGTQTPSVYDESGSTGGGDDSTPSILPAPR) constitute a propeptide, removed for receptor activation. Positions 21 to 42 (QTPSVYDESGSTGGGDDSTPSI) are disordered. The Extracellular segment spans residues 48 to 82 (GYPGQVCANDSDTLELPDSSRALLLGWVPTRLVPA). An N-linked (GlcNAc...) asparagine glycan is attached at Asn-56. The chain crosses the membrane as a helical span at residues 83–103 (LYGLVLVVGLPANGLALWVLA). The Cytoplasmic segment spans residues 104–108 (TQAPR). Residues 109 to 129 (LPSTMLLMNLAAADLLLALAL) traverse the membrane as a helical segment. Residues 130 to 151 (PPRIAYHLRGQRWPFGEAACRL) lie on the Extracellular side of the membrane. Cys-149 and Cys-228 are disulfide-bonded. The chain crosses the membrane as a helical span at residues 152–172 (ATAALYGHMYGSVLLLAAVSL). Topologically, residues 173–192 (DRYLALVHPLRARALRGRRL) are cytoplasmic. A helical membrane pass occupies residues 193–213 (ALGLCMAAWLMAAALALPLTL). The Extracellular segment spans residues 214–247 (QRQTFRLARSDRVLCHDALPLDAQASHWQPAFTC). A helical membrane pass occupies residues 248–268 (LALLGCFLPLLAMLLCYGATL). At 269-283 (HTLAASGRRYGHALR) the chain is on the cytoplasmic side. The chain crosses the membrane as a helical span at residues 284–304 (LTAVVLASAVAFFVPSNLLLL). The Extracellular portion of the chain corresponds to 305-319 (LHYSDPSPSAWGNLY). A helical membrane pass occupies residues 320 to 343 (GAYVPSLALSTLNSCVDPFIYYYV). Residues 344–385 (SAEFRDKVRAGLFQRSPGDTVASKASAEGGSRGMGTHSSLLQ) are Cytoplasmic-facing. The tract at residues 362–385 (DTVASKASAEGGSRGMGTHSSLLQ) is disordered.

It belongs to the G-protein coupled receptor 1 family. In terms of processing, a proteolytic cleavage generates a new N-terminus that functions as a tethered ligand. As to expression, widely expressed, with highest levels in lung, pancreas, thyroid, testis and small intestine. Not expressed in brain, kidney, spinal cord and peripheral blood leukocytes. Also detected in platelets.

It is found in the cell membrane. Activated upon interaction by mucunain, a cowhage (Mucuna pruriens) plant cysteine proteinase. In terms of biological role, receptor for activated thrombin or trypsin coupled to G proteins that stimulate phosphoinositide hydrolysis. May play a role in platelets activation. The sequence is that of Proteinase-activated receptor 4 (F2RL3) from Homo sapiens (Human).